Reading from the N-terminus, the 635-residue chain is Biosynthetic arginine decarboxylase (635 aa).

Lys-103 carries the N6-(pyridoxal phosphate)lysine modification. 283 to 293 (FDVGGGLGVDY) is a binding site for substrate.

It belongs to the Orn/Lys/Arg decarboxylase class-II family. SpeA subfamily. The cofactor is Mg(2+). Pyridoxal 5'-phosphate serves as cofactor.

It catalyses the reaction L-arginine + H(+) = agmatine + CO2. It functions in the pathway amine and polyamine biosynthesis; agmatine biosynthesis; agmatine from L-arginine: step 1/1. In terms of biological role, catalyzes the biosynthesis of agmatine from arginine. In Proteus mirabilis (strain HI4320), this protein is Biosynthetic arginine decarboxylase.